The primary structure comprises 80 residues: SPbeta prophage-derived thioredoxin-like protein YosR (80 aa).

Residues methionine 1–arginine 80 enclose the Thioredoxin domain. Cysteine 11 and cysteine 14 are joined by a disulfide.

Belongs to the thioredoxin family.

The polypeptide is SPbeta prophage-derived thioredoxin-like protein YosR (yosR) (Bacillus subtilis (strain 168)).